Consider the following 242-residue polypeptide: Type III pantothenate kinase (242 aa).

6–13 (DAGNTRLK) is a binding site for ATP. Residues Tyr-90 and 97 to 100 (GADR) contribute to the substrate site. Asp-99 functions as the Proton acceptor in the catalytic mechanism. Asp-119 lines the K(+) pocket. Position 122 (Ser-122) interacts with ATP. Thr-174 is a substrate binding site.

This sequence belongs to the type III pantothenate kinase family. Homodimer. The cofactor is NH4(+). Requires K(+) as cofactor.

Its subcellular location is the cytoplasm. It carries out the reaction (R)-pantothenate + ATP = (R)-4'-phosphopantothenate + ADP + H(+). Its pathway is cofactor biosynthesis; coenzyme A biosynthesis; CoA from (R)-pantothenate: step 1/5. Its function is as follows. Catalyzes the phosphorylation of pantothenate (Pan), the first step in CoA biosynthesis. The polypeptide is Type III pantothenate kinase (Marinobacter nauticus (strain ATCC 700491 / DSM 11845 / VT8) (Marinobacter aquaeolei)).